Reading from the N-terminus, the 110-residue chain is UPF0060 membrane protein Bamb_1160 (110 aa).

The next 4 membrane-spanning stretches (helical) occupy residues 9–29 (ALFA…WLVL), 34–54 (PVWL…LLTL), 66–86 (YGGV…GVAL), and 88–108 (RWDA…ALQP).

The protein belongs to the UPF0060 family.

The protein resides in the cell inner membrane. This chain is UPF0060 membrane protein Bamb_1160, found in Burkholderia ambifaria (strain ATCC BAA-244 / DSM 16087 / CCUG 44356 / LMG 19182 / AMMD) (Burkholderia cepacia (strain AMMD)).